The sequence spans 374 residues: uncharacterized protein (374 aa).

Residues 86 to 104 (RPAATAGTTPATGASGSAR) are compositionally biased toward low complexity. The tract at residues 86–109 (RPAATAGTTPATGASGSARPTDAA) is disordered. A Macro domain is found at 179 to 354 (WWRRSNTTRG…LQRVVFAVHG (176 aa)).

This is an uncharacterized protein from Mycobacterium tuberculosis (strain CDC 1551 / Oshkosh).